The sequence spans 158 residues: MSTAICPCGSGNLLDACCGHYHAGHPAPCAEALMRSRYSAYVLGLIDYLVATTLPAQQAGLDRQSISNWSAQSTWLGLDVESSEVLGGQPEHAFVTFTARWHDGQGEHSHRERSSFVQNSGRWYFIDPTVQLKLGRNDACPCASGQKFKKCCAGYFGS.

It belongs to the UPF0225 family.

In Pseudomonas fluorescens (strain Pf0-1), this protein is UPF0225 protein Pfl01_1218.